The primary structure comprises 332 residues: Glycerol-3-phosphate dehydrogenase [NAD(P)+] (332 aa).

NADPH is bound by residues Trp13, Lys34, and Lys108. Sn-glycerol 3-phosphate is bound by residues Lys108, Gly136, and Ser138. Ala140 contacts NADPH. 5 residues coordinate sn-glycerol 3-phosphate: Lys191, Asp244, Ser254, Arg255, and Asn256. Residue Lys191 is the Proton acceptor of the active site. Arg255 is an NADPH binding site. NADPH contacts are provided by Val279 and Glu281.

It belongs to the NAD-dependent glycerol-3-phosphate dehydrogenase family.

The protein localises to the cytoplasm. It carries out the reaction sn-glycerol 3-phosphate + NAD(+) = dihydroxyacetone phosphate + NADH + H(+). The enzyme catalyses sn-glycerol 3-phosphate + NADP(+) = dihydroxyacetone phosphate + NADPH + H(+). The protein operates within membrane lipid metabolism; glycerophospholipid metabolism. Functionally, catalyzes the reduction of the glycolytic intermediate dihydroxyacetone phosphate (DHAP) to sn-glycerol 3-phosphate (G3P), the key precursor for phospholipid synthesis. This chain is Glycerol-3-phosphate dehydrogenase [NAD(P)+], found in Francisella tularensis subsp. mediasiatica (strain FSC147).